The following is a 267-amino-acid chain: Putative hydro-lyase Arth_3576 (267 aa).

The protein belongs to the D-glutamate cyclase family.

The polypeptide is Putative hydro-lyase Arth_3576 (Arthrobacter sp. (strain FB24)).